We begin with the raw amino-acid sequence, 430 residues long: Tol-Pal system protein TolB (430 aa).

The signal sequence occupies residues 1–21; the sequence is MKQALRVAFGFLILWASVLHA.

This sequence belongs to the TolB family. In terms of assembly, the Tol-Pal system is composed of five core proteins: the inner membrane proteins TolA, TolQ and TolR, the periplasmic protein TolB and the outer membrane protein Pal. They form a network linking the inner and outer membranes and the peptidoglycan layer.

The protein resides in the periplasm. In terms of biological role, part of the Tol-Pal system, which plays a role in outer membrane invagination during cell division and is important for maintaining outer membrane integrity. TolB occupies a key intermediary position in the Tol-Pal system because it communicates directly with both membrane-embedded components, Pal in the outer membrane and TolA in the inner membrane. In Escherichia coli O8 (strain IAI1), this protein is Tol-Pal system protein TolB.